A 270-amino-acid polypeptide reads, in one-letter code: Putative phosphoenolpyruvate synthase regulatory protein (270 aa).

150–157 (GVSRCGKT) is a binding site for ADP.

The protein belongs to the pyruvate, phosphate/water dikinase regulatory protein family. PSRP subfamily.

The catalysed reaction is [pyruvate, water dikinase] + ADP = [pyruvate, water dikinase]-phosphate + AMP + H(+). The enzyme catalyses [pyruvate, water dikinase]-phosphate + phosphate + H(+) = [pyruvate, water dikinase] + diphosphate. In terms of biological role, bifunctional serine/threonine kinase and phosphorylase involved in the regulation of the phosphoenolpyruvate synthase (PEPS) by catalyzing its phosphorylation/dephosphorylation. The polypeptide is Putative phosphoenolpyruvate synthase regulatory protein (Shewanella frigidimarina (strain NCIMB 400)).